The sequence spans 86 residues: Large ribosomal subunit protein uL23 (86 aa).

The protein belongs to the universal ribosomal protein uL23 family. In terms of assembly, part of the 50S ribosomal subunit. Contacts protein L29.

Binds to 23S rRNA. One of the proteins that surrounds the polypeptide exit tunnel on the outside of the ribosome. This chain is Large ribosomal subunit protein uL23, found in Thermococcus onnurineus (strain NA1).